The following is a 3065-amino-acid chain: MAX gene-associated protein (3065 aa).

Residues Lys-4 and Lys-178 each participate in a glycyl lysine isopeptide (Lys-Gly) (interchain with G-Cter in SUMO2) cross-link. The T-box DNA-binding region spans 84–260 (MWNEFYHRST…YNPFAKGFRD (177 aa)). Residues 259 to 277 (RDDGLNNKPQRDGKQKNSS) show a composition bias toward basic and acidic residues. Residues 259 to 322 (RDDGLNNKPQ…GHETSGKGLE (64 aa)) are disordered. Residues 278–289 (DQEGNNISSSSG) show a composition bias toward polar residues. Basic and acidic residues predominate over residues 309–322 (PLSRGHETSGKGLE). Glycyl lysine isopeptide (Lys-Gly) (interchain with G-Cter in SUMO2) cross-links involve residues Lys-323, Lys-329, Lys-349, Lys-432, Lys-460, Lys-465, and Lys-482. Ser-534 carries the post-translational modification Phosphoserine. A Glycyl lysine isopeptide (Lys-Gly) (interchain with G-Cter in SUMO2) cross-link involves residue Lys-570. The interval 604–653 (QNASPNVPGKRGRPRKLKLCKAGRPPKNTGKSLISTKNTPVSPGSTFPDV) is disordered. A Phosphoserine modification is found at Ser-607. A Glycyl lysine isopeptide (Lys-Gly) (interchain with G-Cter in SUMO2) cross-link involves residue Lys-613. Positions 613–624 (KRGRPRKLKLCK) are enriched in basic residues. Polar residues predominate over residues 632–648 (TGKSLISTKNTPVSPGS). Position 645 is a phosphoserine (Ser-645). Residues Lys-654, Lys-785, Lys-791, Lys-817, and Lys-826 each participate in a glycyl lysine isopeptide (Lys-Gly) (interchain with G-Cter in SUMO2) cross-link. At Ser-851 the chain carries Phosphoserine. The disordered stretch occupies residues 881–911 (STSYSLKPHSVPPVSRKAKSQNRQATFSGRT). The segment covering 901–911 (QNRQATFSGRT) has biased composition (polar residues). Position 924 is a phosphoserine (Ser-924). Residue Lys-928 forms a Glycyl lysine isopeptide (Lys-Gly) (interchain with G-Cter in SUMO2) linkage. The segment at 971-990 (RQAQQQQQQQQGSRPPGLSK) is disordered. A compositionally biased stretch (low complexity) spans 972-981 (QAQQQQQQQQ). Glycyl lysine isopeptide (Lys-Gly) (interchain with G-Cter in SUMO2) cross-links involve residues Lys-990, Lys-1091, Lys-1140, Lys-1162, Lys-1199, and Lys-1207. Positions 1111 to 1147 (YDTLGEEAREEEEGIREEEEQLKEKKKRKKLEYTICE) form a coiled coil. A Phosphoserine modification is found at Ser-1208. Disordered stretches follow at residues 1246–1332 (RKKE…PGGP) and 1380–1429 (RKSR…MEDI). 2 stretches are compositionally biased toward low complexity: residues 1253–1269 (QPSS…QQTS) and 1310–1322 (KSSC…SSTS). A phosphoserine mark is found at Ser-1430 and Ser-1457. Residues Lys-1461 and Lys-1502 each participate in a glycyl lysine isopeptide (Lys-Gly) (interchain with G-Cter in SUMO2) cross-link. Disordered regions lie at residues 1488 to 1517 (SRKP…PGKN), 1905 to 1927 (SPPE…YSSG), and 1967 to 2029 (QMKR…EDRG). 2 stretches are compositionally biased toward polar residues: residues 1495–1514 (LPST…TNRP) and 1911–1927 (SFAS…YSSG). The segment covering 1968-1994 (MKRESQNPDQKDETNSIKREQETKKVL) has biased composition (basic and acidic residues). Glycyl lysine isopeptide (Lys-Gly) (interchain with G-Cter in SUMO2) cross-links involve residues Lys-1985 and Lys-1992. Over residues 2008–2023 (IKQNSGAATSEETLND) the composition is skewed to polar residues. Glycyl lysine isopeptide (Lys-Gly) (interchain with G-Cter in SUMO2) cross-links involve residues Lys-2103, Lys-2113, Lys-2135, Lys-2139, Lys-2146, Lys-2159, Lys-2194, Lys-2206, and Lys-2238. A disordered region spans residues 2258–2316 (RRAAKSSRGNGHFQGHLLLPGEQIQPKQEKKGGRSSADFTVLDLEEDDEDDNEKTDDSI). The residue at position 2265 (Arg-2265) is an Omega-N-methylarginine. Residue Lys-2284 forms a Glycyl lysine isopeptide (Lys-Gly) (interchain with G-Cter in SUMO2) linkage. A compositionally biased stretch (acidic residues) spans 2300–2316 (DLEEDDEDDNEKTDDSI). Glycyl lysine isopeptide (Lys-Gly) (interchain with G-Cter in SUMO2) cross-links involve residues Lys-2378, Lys-2413, Lys-2457, and Lys-2532. Positions 2423–2474 (YYRRTHTANERRRRGEMRDLFEKLKITLGLLHSSKVSKSLILTRAFSEIQGL) constitute a bHLH domain. A Phosphoserine modification is found at Ser-2541. Lys-2546 is covalently cross-linked (Glycyl lysine isopeptide (Lys-Gly) (interchain with G-Cter in SUMO2)). Residues 2576–2595 (KKDQATENTSPLNTPHTSAN) are disordered. The segment covering 2581-2595 (TENTSPLNTPHTSAN) has biased composition (polar residues). Residues Lys-2629, Lys-2679, Lys-2698, and Lys-2784 each participate in a glycyl lysine isopeptide (Lys-Gly) (interchain with G-Cter in SUMO2) cross-link. The tract at residues 2668-2709 (GSKYPHEVPDSKPSDHLKDTVRNEDNSLEDKGRISSRGNRDG) is disordered. The segment covering 2671 to 2709 (YPHEVPDSKPSDHLKDTVRNEDNSLEDKGRISSRGNRDG) has biased composition (basic and acidic residues). Residues 2817 to 2841 (DDTDETLTSLLNEIAFLNQQLNDDS) are a coiled coil. Phosphoserine occurs at positions 2910 and 2921. The interval 2944-2968 (AIDGGKNTSGLPAEPESVSSPPTLH) is disordered. Ser-2978 carries the phosphoserine modification. Residue Lys-3041 forms a Glycyl lysine isopeptide (Lys-Gly) (interchain with G-Cter in SUMO2) linkage.

As to quaternary structure, interacts with MAX. Requires dimerization with MAX for E-box binding. Component of some MLL1/MLL complex, at least composed of the core components KMT2A/MLL1, ASH2L, HCFC1/HCF1, WDR5 and RBBP5, as well as the facultative components BACC1, CHD8, E2F6, HSP70, INO80C, KANSL1, LAS1L, MAX, MCRS1, MGA, MYST1/MOF, PELP1, PHF20, PRP31, RING2, RUVB1/TIP49A, RUVB2/TIP49B, SENP3, TAF1, TAF4, TAF6, TAF7, TAF9 and TEX10. Interacts with ZMYND11. In terms of tissue distribution, highly expressed in germ cells and granulosa cells.

Its subcellular location is the nucleus. In terms of biological role, functions as a dual-specificity transcription factor, regulating the expression of both MAX-network and T-box family target genes. Functions as a repressor or an activator. Binds to 5'-AATTTCACACCTAGGTGTGAAATT-3' core sequence and seems to regulate MYC-MAX target genes. Suppresses transcriptional activation by MYC and inhibits MYC-dependent cell transformation. Function activated by heterodimerization with MAX. This heterodimerization serves the dual function of both generating an E-box-binding heterodimer and simultaneously blocking interaction of a corepressor. This chain is MAX gene-associated protein, found in Homo sapiens (Human).